The sequence spans 181 residues: MNRKEKTAIIQQLTESFKSHDCFYIVDSTKLSVQATNQFRRDCHQAGVTYKVAKNTLILKALDEVPHMASDVYTSLRDEVLKGFSGILFFNETASVPAKLVKEFRKQKNLDRPILKGAYIDGELFVGDENLEALSQLKSKQVLIGEIITLLQSPMANVLSALQSGKNQLSGIIKTLGDRSE.

Belongs to the universal ribosomal protein uL10 family. As to quaternary structure, part of the ribosomal stalk of the 50S ribosomal subunit. The N-terminus interacts with L11 and the large rRNA to form the base of the stalk. The C-terminus forms an elongated spine to which L12 dimers bind in a sequential fashion forming a multimeric L10(L12)X complex.

Functionally, forms part of the ribosomal stalk, playing a central role in the interaction of the ribosome with GTP-bound translation factors. The polypeptide is Large ribosomal subunit protein uL10 (Amoebophilus asiaticus (strain 5a2)).